Here is a 322-residue protein sequence, read N- to C-terminus: Ferredoxin--NADP reductase (322 aa).

The FAD site is built by Asp-34, Gln-42, Tyr-47, Val-87, Phe-120, Asp-279, and Thr-320.

This sequence belongs to the ferredoxin--NADP reductase type 2 family. Homodimer. FAD is required as a cofactor.

The catalysed reaction is 2 reduced [2Fe-2S]-[ferredoxin] + NADP(+) + H(+) = 2 oxidized [2Fe-2S]-[ferredoxin] + NADPH. This is Ferredoxin--NADP reductase from Streptococcus gordonii (strain Challis / ATCC 35105 / BCRC 15272 / CH1 / DL1 / V288).